The chain runs to 364 residues: tRNA N6-adenosine threonylcarbamoyltransferase (364 aa).

Fe cation is bound by residues H115 and H119. Substrate is bound by residues 137–141 (LVSGG), D170, G183, and N288. Residue D316 coordinates Fe cation. The tract at residues 341-364 (PRSRWPLDEKSAPLIGTGRRGTKA) is disordered.

The protein belongs to the KAE1 / TsaD family. The cofactor is Fe(2+).

The protein resides in the cytoplasm. The enzyme catalyses L-threonylcarbamoyladenylate + adenosine(37) in tRNA = N(6)-L-threonylcarbamoyladenosine(37) in tRNA + AMP + H(+). Required for the formation of a threonylcarbamoyl group on adenosine at position 37 (t(6)A37) in tRNAs that read codons beginning with adenine. Is involved in the transfer of the threonylcarbamoyl moiety of threonylcarbamoyl-AMP (TC-AMP) to the N6 group of A37, together with TsaE and TsaB. TsaD likely plays a direct catalytic role in this reaction. The protein is tRNA N6-adenosine threonylcarbamoyltransferase of Bartonella henselae (strain ATCC 49882 / DSM 28221 / CCUG 30454 / Houston 1) (Rochalimaea henselae).